The chain runs to 432 residues: Protein distal antenna-related (432 aa).

Residues 15–66 (TRGKRPLRNLTPNDKVRAIQRIHNGETKASVSRDLGVPESTLRGWCKNEQKL) form the HTH psq-type domain. The H-T-H motif DNA-binding region spans 42 to 62 (KASVSRDLGVPESTLRGWCKN). Disordered stretches follow at residues 195-221 (ESADTDIKSPQSTTDITDTAREENSTK) and 401-432 (SCASVSSRNNSRSQTPDKSTATSIACLSDGEQ). 2 stretches are compositionally biased toward polar residues: residues 202-211 (KSPQSTTDIT) and 401-425 (SCASVSSRNNSRSQTPDKSTATSIA).

In terms of assembly, interacts with itself, dan, ey and dac to form a complex (or complexes) containing the RD factors.

It is found in the nucleus. Its function is as follows. Probable transcription factor with a role in the retinal determination (RD) network. Regulates ato expression and is required for normal R8 induction and differentiation. Danr appears to repress Dan expression, but Dan is required for Danr expression anterior to the morphogenetic furrow (MF). Dan and Danr lie downstream of so and require dac function for highest levels of expression. Contributes to differentiation of antenna-specific characteristics; effector gene that acts downstream of homothorax (hth), Distal-less (Dll), cut (ct) and spineless (ss) genes to control differentiation of distal antennal structures. This is Protein distal antenna-related from Drosophila pseudoobscura pseudoobscura (Fruit fly).